A 459-amino-acid polypeptide reads, in one-letter code: Putrescine aminotransferase (459 aa).

Pyridoxal 5'-phosphate is bound by residues 150-151 (GT) and glutamine 274. Lysine 300 carries the N6-(pyridoxal phosphate)lysine modification. Threonine 332 is a pyridoxal 5'-phosphate binding site.

This sequence belongs to the class-III pyridoxal-phosphate-dependent aminotransferase family. Putrescine aminotransferase subfamily. It depends on pyridoxal 5'-phosphate as a cofactor.

The enzyme catalyses an alkane-alpha,omega-diamine + 2-oxoglutarate = an omega-aminoaldehyde + L-glutamate. It carries out the reaction putrescine + 2-oxoglutarate = 1-pyrroline + L-glutamate + H2O. It catalyses the reaction cadaverine + 2-oxoglutarate = 5-aminopentanal + L-glutamate. The protein operates within amine and polyamine degradation; putrescine degradation; 4-aminobutanal from putrescine (transaminase route): step 1/1. Functionally, catalyzes the aminotransferase reaction from putrescine to 2-oxoglutarate, leading to glutamate and 4-aminobutanal, which spontaneously cyclizes to form 1-pyrroline. This is the first step in one of two pathways for putrescine degradation, where putrescine is converted into 4-aminobutanoate (gamma-aminobutyrate or GABA) via 4-aminobutanal. Also functions as a cadaverine transaminase in a a L-lysine degradation pathway to succinate that proceeds via cadaverine, glutarate and L-2-hydroxyglutarate. In Shigella boydii serotype 4 (strain Sb227), this protein is Putrescine aminotransferase.